We begin with the raw amino-acid sequence, 263 residues long: Hemin import ATP-binding protein HmuV (263 aa).

Positions I2–R242 constitute an ABC transporter domain. G34 to T41 lines the ATP pocket.

This sequence belongs to the ABC transporter superfamily. Heme (hemin) importer (TC 3.A.1.14.5) family. As to quaternary structure, the complex is composed of two ATP-binding proteins (HmuV), two transmembrane proteins (HmuU) and a solute-binding protein (HmuT).

The protein localises to the cell inner membrane. In terms of biological role, part of the ABC transporter complex HmuTUV involved in hemin import. Responsible for energy coupling to the transport system. In Mesorhizobium japonicum (strain LMG 29417 / CECT 9101 / MAFF 303099) (Mesorhizobium loti (strain MAFF 303099)), this protein is Hemin import ATP-binding protein HmuV.